Consider the following 336-residue polypeptide: Adenosine deaminase (336 aa).

Positions 15 and 17 each coordinate Zn(2+). Substrate-binding residues include His17, Asp19, and Gly172. A Zn(2+)-binding site is contributed by His199. The active-site Proton donor is Glu202. Asp279 lines the Zn(2+) pocket.

Belongs to the metallo-dependent hydrolases superfamily. Adenosine and AMP deaminases family. Adenosine deaminase subfamily. Zn(2+) serves as cofactor.

It carries out the reaction adenosine + H2O + H(+) = inosine + NH4(+). The enzyme catalyses 2'-deoxyadenosine + H2O + H(+) = 2'-deoxyinosine + NH4(+). In terms of biological role, catalyzes the hydrolytic deamination of adenosine and 2-deoxyadenosine. The sequence is that of Adenosine deaminase from Streptococcus thermophilus (strain ATCC BAA-250 / LMG 18311).